An 873-amino-acid polypeptide reads, in one-letter code: Zinc finger X-linked protein ZXDB (873 aa).

Disordered stretches follow at residues 1–23, 48–120, 138–184, 240–259, and 301–330; these read MEIP…GCPA, RGAQ…GGSR, VETV…LSAV, EPGV…GALI, and AEPA…GPAG. 2 stretches are compositionally biased toward gly residues: residues 14 to 23 and 85 to 120; these read QGAGGGGCPA and SGGG…GGSR. Residue Arg89 is modified to Omega-N-methylarginine. The segment covering 150–165 has biased composition (basic and acidic residues); that stretch reads VRREEAGAGPRPERRQ. Residues 240–255 are compositionally biased toward pro residues; the sequence is EPGVAPFPQPQPPPQP. Low complexity predominate over residues 316–327; it reads APAAAAAQSPRG. C2H2-type zinc fingers lie at residues 340–364, 373–397, 403–427, 433–455, 462–486, 493–517, 523–547, 553–577, 583–607, and 616–641; these read YLCP…LLTH, FKCP…LQSH, FGCP…MKGH, FKCE…QRSH, YQCA…NRAH, FACS…LRSH, FLCD…KRKH, FTCP…SITH, FVCP…SKKH, and SRCP…TKRH. The segment at 340-646 is required for interaction with ZXDC; the sequence is YLCPEAQCGQ…MTKRHNLSQD (307 aa). The segment at 645 to 776 is required for transcriptional activation; the sequence is QDLLAQLEAA…DMDDVSAGNV (132 aa).

Belongs to the ZXD family. As to quaternary structure, self-associates. Interacts with ZXDC and CIITA.

It is found in the nucleus. Its function is as follows. Cooperates with CIITA to promote transcription of MHC class I and MHC class II genes. The protein is Zinc finger X-linked protein ZXDB (Zxdb) of Mus musculus (Mouse).